The primary structure comprises 306 residues: Ribosomal RNA small subunit methyltransferase H (306 aa).

Residues 33 to 35, aspartate 51, phenylalanine 82, aspartate 96, and glutamine 103 contribute to the S-adenosyl-L-methionine site; that span reads GGY.

It belongs to the methyltransferase superfamily. RsmH family.

Its subcellular location is the cytoplasm. The catalysed reaction is cytidine(1402) in 16S rRNA + S-adenosyl-L-methionine = N(4)-methylcytidine(1402) in 16S rRNA + S-adenosyl-L-homocysteine + H(+). Functionally, specifically methylates the N4 position of cytidine in position 1402 (C1402) of 16S rRNA. The chain is Ribosomal RNA small subunit methyltransferase H from Rickettsia akari (strain Hartford).